Consider the following 167-residue polypeptide: Epithelial membrane protein 2 (167 aa).

The chain crosses the membrane as a helical span at residues 1–21 (MLVLLAFIIVFHITSAALLLV). Residues Asn44, Asn47, and Asn52 are each glycosylated (N-linked (GlcNAc...) asparagine). The next 3 membrane-spanning stretches (helical) occupy residues 67–87 (TMIL…LQLF), 95–115 (FVLT…AASI), and 143–163 (FILA…YLIL).

It belongs to the PMP-22/EMP/MP20 family. As to quaternary structure, interacts with PTK2; regulates PTK2 activation and localization. Interacts with ITGB3; regulates the levels of the heterodimer ITGA5-ITGB3 integrin surface expression. Interacts with P2RX7 (via C-terminus). Interacts with ITGB1; the interaction may be direct or indirect and ITGB1 has a heterodimer form.

It is found in the golgi apparatus membrane. The protein localises to the cell membrane. The protein resides in the apical cell membrane. It localises to the membrane raft. Its subcellular location is the cytoplasm. It is found in the nucleus. The protein localises to the perinuclear region. Functions as a key regulator of cell membrane composition by regulating protein surface expression. Also, plays a role in regulation of processes including cell migration, cell proliferation, cell contraction and cell adhesion. Regulates transepithelial migration of neutrophils into the alveolar lumen, potentially via mediation of cell surface expression of adhesion markers and lipid raft formation. Negatively regulates caveolae formation by reducing CAV1 expression and CAV1 amount by increasing lysosomal degradation. Facilitates surface trafficking and the formation of lipid rafts bearing GPI-anchor proteins. Regulates surface expression of MHC1 and ICAM1 proteins increasing susceptibility to T-cell mediated cytotoxicity. Regulates the plasma membrane expression of the integrin heterodimers ITGA6-ITGB1, ITGA5-ITGB3 and ITGA5-ITGB1 resulting in modulation of cell-matrix adhesion. Also regulates many processes through PTK2. Regulates blood vessel endothelial cell migration and angiogenesis by regulating VEGF protein expression through PTK2 activation. Regulates cell migration and cell contraction through PTK2 and SRC activation. Regulates focal adhesion density, F-actin conformation and cell adhesion capacity through interaction with PTK2. Positively regulates cell proliferation. Plays a role during cell death and cell blebbing. Promotes angiogenesis and vasculogenesis through induction of VEGFA via a HIF1A-dependent pathway. Also plays a role in embryo implantation by regulating surface trafficking of integrin heterodimer ITGA5-ITGB3. Plays a role in placental angiogenesis and uterine natural killer cell regulation at the maternal-fetal placental interface, however not required in the maternal tissues for a viable pregnancy. Involved in the early stages of embryogenic development and cardiogenesis, potentially via regulation of epithelial-mesenchymal transition timing. May play a role in glomerular filtration. The protein is Epithelial membrane protein 2 (EMP2) of Bos taurus (Bovine).